A 148-amino-acid polypeptide reads, in one-letter code: Cytochrome c-type biogenesis protein CcmE (148 aa).

Topologically, residues 1-7 (MKPRHKK) are cytoplasmic. A helical; Signal-anchor for type II membrane protein membrane pass occupies residues 8-28 (LAIIASSVTALGVASVLVLNA). Residues 29 to 148 (FQSNLVFFFS…ADKARKTVMQ (120 aa)) lie on the Periplasmic side of the membrane. Residues His123 and Tyr127 each contribute to the heme site.

This sequence belongs to the CcmE/CycJ family.

The protein resides in the cell inner membrane. In terms of biological role, heme chaperone required for the biogenesis of c-type cytochromes. Transiently binds heme delivered by CcmC and transfers the heme to apo-cytochromes in a process facilitated by CcmF and CcmH. The protein is Cytochrome c-type biogenesis protein CcmE of Nitrosospira multiformis (strain ATCC 25196 / NCIMB 11849 / C 71).